A 206-amino-acid chain; its full sequence is Thymidylate kinase (206 aa).

Gly-11–Thr-18 is a binding site for ATP.

Belongs to the thymidylate kinase family.

The enzyme catalyses dTMP + ATP = dTDP + ADP. Functionally, phosphorylation of dTMP to form dTDP in both de novo and salvage pathways of dTTP synthesis. This Burkholderia mallei (strain NCTC 10247) protein is Thymidylate kinase.